A 136-amino-acid polypeptide reads, in one-letter code: 6,7-dimethyl-8-ribityllumazine synthase (136 aa).

5-amino-6-(D-ribitylamino)uracil is bound by residues phenylalanine 11, serine 43–aspartate 45, and alanine 67–isoleucine 69. Position 72–73 (glutamate 72–threonine 73) interacts with (2S)-2-hydroxy-3-oxobutyl phosphate. Histidine 75 acts as the Proton donor in catalysis. Leucine 100 is a binding site for 5-amino-6-(D-ribitylamino)uracil. Arginine 115 contributes to the (2S)-2-hydroxy-3-oxobutyl phosphate binding site.

This sequence belongs to the DMRL synthase family.

The enzyme catalyses (2S)-2-hydroxy-3-oxobutyl phosphate + 5-amino-6-(D-ribitylamino)uracil = 6,7-dimethyl-8-(1-D-ribityl)lumazine + phosphate + 2 H2O + H(+). It functions in the pathway cofactor biosynthesis; riboflavin biosynthesis; riboflavin from 2-hydroxy-3-oxobutyl phosphate and 5-amino-6-(D-ribitylamino)uracil: step 1/2. Functionally, catalyzes the formation of 6,7-dimethyl-8-ribityllumazine by condensation of 5-amino-6-(D-ribitylamino)uracil with 3,4-dihydroxy-2-butanone 4-phosphate. This is the penultimate step in the biosynthesis of riboflavin. This chain is 6,7-dimethyl-8-ribityllumazine synthase, found in Picrophilus torridus (strain ATCC 700027 / DSM 9790 / JCM 10055 / NBRC 100828 / KAW 2/3).